The primary structure comprises 608 residues: Nuclear protein localization protein 4 homolog (608 aa).

N-acetylalanine is present on Ala2. The residue at position 179 (Lys179) is an N6-acetyllysine. Residues 226–363 form the MPN domain; it reads IMFENHTVAD…MCRLSPDGHF (138 aa). The segment at 580-608 adopts a RanBP2-type zinc-finger fold; the sequence is TAAMWACQHCTFMNQPGTGHCEMCSLPRT.

It belongs to the NPL4 family. As to quaternary structure, heterodimer with UFD1. The heterodimer binds ubiquitinated proteins. The heterodimer binds to VCP and inhibits Golgi membrane fusion. Interacts with ZFAND2B; probably through VCP. As to expression, expressed at highest levels in brain, heart, skeletal muscle, kidney and fetal liver.

It localises to the cytoplasm. Its subcellular location is the cytosol. The protein localises to the endoplasmic reticulum. It is found in the nucleus. It functions in the pathway protein degradation; proteasomal ubiquitin-dependent pathway. Functionally, the ternary complex containing UFD1, VCP and NPLOC4 binds ubiquitinated proteins and is necessary for the export of misfolded proteins from the ER to the cytoplasm, where they are degraded by the proteasome. The NPLOC4-UFD1-VCP complex regulates spindle disassembly at the end of mitosis and is necessary for the formation of a closed nuclear envelope. Acts as a negative regulator of type I interferon production via the complex formed with VCP and UFD1, which binds to RIGI and recruits RNF125 to promote ubiquitination and degradation of RIGI. The protein is Nuclear protein localization protein 4 homolog (NPLOC4) of Homo sapiens (Human).